Here is a 241-residue protein sequence, read N- to C-terminus: 1-(5-phosphoribosyl)-5-[(5-phosphoribosylamino)methylideneamino] imidazole-4-carboxamide isomerase (241 aa).

The active-site Proton acceptor is the Asp10. The active-site Proton donor is the Asp131.

It belongs to the HisA/HisF family.

The protein localises to the cytoplasm. It catalyses the reaction 1-(5-phospho-beta-D-ribosyl)-5-[(5-phospho-beta-D-ribosylamino)methylideneamino]imidazole-4-carboxamide = 5-[(5-phospho-1-deoxy-D-ribulos-1-ylimino)methylamino]-1-(5-phospho-beta-D-ribosyl)imidazole-4-carboxamide. It functions in the pathway amino-acid biosynthesis; L-histidine biosynthesis; L-histidine from 5-phospho-alpha-D-ribose 1-diphosphate: step 4/9. In Bifidobacterium adolescentis (strain ATCC 15703 / DSM 20083 / NCTC 11814 / E194a), this protein is 1-(5-phosphoribosyl)-5-[(5-phosphoribosylamino)methylideneamino] imidazole-4-carboxamide isomerase.